A 1114-amino-acid chain; its full sequence is Hephaestin-like protein (1114 aa).

The N-terminal stretch at 1–26 (MMDRSNAAFVLTACFIFSQLICHVAA) is a signal peptide. 6 Plastocyanin-like domains span residues 27–210 (ITRT…LICR), 218–365 (QQSG…VTKC), 380–562 (KRTY…LLTC), 572–719 (TRKD…VNTC), 730–915 (KTRD…LIIC), and 924–1114 (TEER…LLKA). Residues 27 to 1091 (ITRTYYIAAV…KTTPKPITAA (1065 aa)) lie on the Extracellular side of the membrane. A glycan (N-linked (GlcNAc...) asparagine) is linked at N121. Cu cation contacts are provided by H129, H131, H189, and H191. Residues C183 and C209 are joined by a disulfide bond. N236 carries N-linked (GlcNAc...) asparagine glycosylation. An intrachain disulfide couples C284 to C365. H303, C346, and H351 together coordinate Cu cation. Residues N361, N478, and N489 are each glycosylated (N-linked (GlcNAc...) asparagine). 2 cysteine pairs are disulfide-bonded: C536–C562 and C638–C719. Cu cation-binding residues include H657, C700, H705, and M710. N-linked (GlcNAc...) asparagine glycosylation occurs at N831. Cysteines 889 and 915 form a disulfide. The N-linked (GlcNAc...) asparagine glycan is linked to N944. Cu cation-binding residues include H1014, H1017, H1019, H1059, C1060, H1061, H1065, and M1070. A helical membrane pass occupies residues 1092-1112 (SSFVTSSIFIYLSFPVLAMLL). Residues 1113–1114 (KA) lie on the Cytoplasmic side of the membrane.

This sequence belongs to the multicopper oxidase family. Cu cation is required as a cofactor. As to expression, component of the acid-insoluble and acid-soluble organic matrix of the aragonitic skeleton (at protein level).

Its subcellular location is the membrane. Functionally, may function as a ferroxidase and may be involved in copper transport and homeostasis. The protein is Hephaestin-like protein of Acropora millepora (Staghorn coral).